The following is a 924-amino-acid chain: Protein argonaute 4 (924 aa).

2 disordered regions span residues 1 to 37 (MDSTNGNGADLESANGANGSGVTEALPPPPPVIPPNV) and 159 to 185 (TRANGNGSPNGNESPSDGDRKRLRRPN). A compositionally biased stretch (pro residues) spans 26–37 (LPPPPPVIPPNV). The segment covering 162-173 (NGNGSPNGNESP) has biased composition (low complexity). Positions 292 to 408 (PVVDFLIANQ…IPLELCALVP (117 aa)) constitute a PAZ domain. The region spanning 577–885 (FILCVLPDKK…AAAQLGTFMK (309 aa)) is the Piwi domain. The Nuclear localization signal signature appears at 584 to 591 (DKKNSDLY).

It belongs to the argonaute family. Ago subfamily. In terms of assembly, interacts with NRPE1 (via C-terminus). Binding to NRPE1 is required for its function in RdDM. Interacts with turnip crinkle virus (TCV) capsid protein P38; this interaction inhibits probably RNA silencing ability of AGO4. Interacts with SDE3. Binds to RDM3. Binds chromatin at loci subject to transcriptional silencing. Interacts with MBD6. As to expression, expressed in embryos, mature leaves, vascular tissue of the sepals, stamens and stigma, at the tip of the style and siliques.

The protein resides in the nucleus. The protein localises to the nucleolus. It localises to the nucleoplasm. It is found in the cajal body. Its function is as follows. Together with RDM3, required for transcriptional gene silencing (TGS) by DNA methylation and repressive histone modifications (H3K9me2) of several chromatin loci. Component of the RISC complex that associate with the small interfering RNA (siRNA) pathway involved in direct cytosine methylation at endogenous DNA repeats. Forms a AGO4/NRPE1/siRNA complex in cajal body, facilitating its function in RNA-directed gene silencing of target loci. Required for CpNpG and asymmetric DNA methylation as well as histone H3 'Lys-9' methylation (H3K9me) at SUP and SN1 loci. May be not required for CpG methylation. Required for the production and maintenance of retrotransposon SN1 and Copia and ribosomal 5S 25 nucleotide siRNAs specialized in gene silencing at chromatin level. Involved in de novo methylation of FWA gene and required for the maintenance of RNA-directed DNA methylation (RdDM) triggered by inverted repeat transgenes. Interacts with miRNA miR390 and miR172, targeting respectively TAS3 and AP2 mRNAs, and mediates cleavage of miRNA targets. Associates mainly with small RNAs of 24 nucleotide in length and preferentially recruits small RNAs with a 5' terminal adenosine. Targeted by the turnip yellows virus (TuYV) protein P0 (via F-box-like domain) for probable proteasome degradation and thereby inactivating AGO4 function in RNA silencing. Required for resistance to the bacterial pathogen P.syringae. Works independently of the RdDM pathway in mediating resistance to P.syringae. RdDM is involved in viral genome methylation as an epigenetic defense against geminiviruses. The chain is Protein argonaute 4 from Arabidopsis thaliana (Mouse-ear cress).